A 205-amino-acid chain; its full sequence is Probable GTP-binding protein EngB (205 aa).

Positions 29-203 (QGAEIAFIGR…KAVLSQWFRS (175 aa)) constitute an EngB-type G domain. GTP-binding positions include 37-44 (GRSNAGKS), 64-68 (GRTQM), 82-85 (DLPG), 149-152 (TKSD), and 182-184 (FSS). Mg(2+) is bound by residues Ser-44 and Thr-66.

The protein belongs to the TRAFAC class TrmE-Era-EngA-EngB-Septin-like GTPase superfamily. EngB GTPase family. Requires Mg(2+) as cofactor.

Functionally, necessary for normal cell division and for the maintenance of normal septation. This Coxiella burnetii (strain CbuG_Q212) (Coxiella burnetii (strain Q212)) protein is Probable GTP-binding protein EngB.